The following is a 121-amino-acid chain: Basic phospholipase A2 BmjeTX-II (121 aa).

Cystine bridges form between cysteine 26–cysteine 114, cysteine 28–cysteine 45, cysteine 44–cysteine 95, cysteine 50–cysteine 121, cysteine 51–cysteine 88, cysteine 58–cysteine 82, and cysteine 76–cysteine 86. Ca(2+) is bound by residues tyrosine 27, glycine 29, and glycine 31. Residue histidine 48 is part of the active site. Residue aspartate 49 coordinates Ca(2+). The active site involves aspartate 89.

It depends on Ca(2+) as a cofactor. Expressed by the venom gland.

It is found in the secreted. The catalysed reaction is a 1,2-diacyl-sn-glycero-3-phosphocholine + H2O = a 1-acyl-sn-glycero-3-phosphocholine + a fatty acid + H(+). Its function is as follows. Snake venom phospholipase A2 (PLA2) that induces blockade of neuromuscular contraction in an indirectly stimulated chick biventer cervicis nerve-muscle preparation. Does not inhibit contraction of chick biventer cervicic nerve-muscle preparation in response to treatment with acetylcholine or KCl. The neuromuscular blockade is mediated by inhibitory action at the presynaptic motor nerve endings. Lyses skeletal myoblasts and myotubes in vitro, and intramuscular injection causes local muscle necrosis. Induces edema in the mouse foot pad. Induces a transient increase of IL-6 levels. PLA2 catalyzes the calcium-dependent hydrolysis of the 2-acyl groups in 3-sn-phosphoglycerides. This Bothrops marajoensis (Marajo lancehead) protein is Basic phospholipase A2 BmjeTX-II.